We begin with the raw amino-acid sequence, 780 residues long: Pendrin (780 aa).

The Cytoplasmic segment spans residues Met-1–Asp-87. The chain crosses the membrane as a helical span at residues Ile-88–Leu-108. Ala-109 is a topological domain (extracellular). Residues Ala-110–Phe-130 traverse the membrane as a helical segment. Residues Gly-131–His-135 lie on the Cytoplasmic side of the membrane. Residues Ile-136 to Ala-156 form a helical membrane-spanning segment. Over Pro-157 to Thr-191 the chain is Extracellular. Residues Leu-192 to Val-212 traverse the membrane as a helical segment. The Cytoplasmic segment spans residues Arg-213–Pro-218. A helical membrane pass occupies residues Leu-219–Val-239. Over Leu-240–Asn-263 the chain is Extracellular. Residues Ile-264–Ala-284 traverse the membrane as a helical segment. The Cytoplasmic portion of the chain corresponds to Val-285–Arg-295. Residues Ile-296 to Gly-316 traverse the membrane as a helical segment. The Extracellular portion of the chain corresponds to Ala-317 to Gly-344. The helical transmembrane segment at Leu-345 to Val-365 threads the bilayer. Topologically, residues Ser-366–Glu-384 are cytoplasmic. The chain crosses the membrane as a helical span at residues Phe-385–Thr-405. Residues Ala-406–Gln-421 are Extracellular-facing. Residues Val-422–Leu-442 traverse the membrane as a helical segment. The Cytoplasmic portion of the chain corresponds to Glu-443–Ser-448. A helical transmembrane segment spans residues Val-449–Pro-469. Residues Arg-470–Cys-486 are Extracellular-facing. Residues Ile-487–Leu-507 traverse the membrane as a helical segment. Residues Thr-508–Ser-780 are Cytoplasmic-facing. In terms of domain architecture, STAS spans His-535–Leu-729.

This sequence belongs to the SLC26A/SulP transporter (TC 2.A.53) family. As to quaternary structure, interacts with IQGAP1. This interaction enhances the chloride-bicarbonate exchange activity of SLC26A4. Highly expressed in the kidney (at protein level). Throughout the endolymphatic duct and sac, in distinct areas of the utricle and saccule, and in the external sulcus region within the cochlea. Expressed in the parotid gland.

Its subcellular location is the apical cell membrane. The protein resides in the cell membrane. It carries out the reaction chloride(in) = chloride(out). The catalysed reaction is iodide(out) = iodide(in). The enzyme catalyses hydrogencarbonate(in) + chloride(out) = hydrogencarbonate(out) + chloride(in). It catalyses the reaction iodide(in) + hydrogencarbonate(out) = iodide(out) + hydrogencarbonate(in). It carries out the reaction iodide(in) + chloride(out) = iodide(out) + chloride(in). The catalysed reaction is formate(in) + chloride(out) = formate(out) + chloride(in). In terms of biological role, sodium-independent transporter of chloride and iodide. Mediates electroneutral iodide-chloride, iodide-bicarbonate and chloride-bicarbonate exchange with 1:1 stoichiometry. Mediates elctroneutral chloride-formate exchange. The sequence is that of Pendrin (Slc26a4) from Mus musculus (Mouse).